A 131-amino-acid polypeptide reads, in one-letter code: uncharacterized protein (131 aa).

The protein localises to the plastid. It is found in the chloroplast. This is an uncharacterized protein from Chlorella vulgaris (Green alga).